The chain runs to 944 residues: Protein phosphatase 1 regulatory subunit 37 homolog (944 aa).

Positions 42–71 (QQQSHSAATSVRKKTCQDANSSGEDPNGRI) are disordered. LRR repeat units lie at residues 203–224 (SCVR…TTIF), 232–255 (SLQM…CKMA), 262–282 (SLTC…LVLI), 290–311 (GLRE…HIYQ), and 318–338 (SLQL…RHIC). A disordered region spans residues 517 to 598 (EEGDSGVEKK…KERHQRFVRS (82 aa)). Positions 522–542 (GVEKKDGNECEGEDNKDRQDT) are enriched in basic and acidic residues. 2 stretches are compositionally biased toward polar residues: residues 543–554 (PAETENGVSSNE) and 567–585 (PESN…STSK). Residues 586 to 595 (LSRKERHQRF) are compositionally biased toward basic residues.

The protein belongs to the PPP1R37 family.

The polypeptide is Protein phosphatase 1 regulatory subunit 37 homolog (Caenorhabditis elegans).